Here is a 98-residue protein sequence, read N- to C-terminus: Molybdopterin synthase sulfur carrier subunit (98 aa).

A 1-thioglycine; alternate modification is found at glycine 98. Glycine 98 is modified (glycyl adenylate; alternate).

The protein belongs to the MoaD family. MOCS2A subfamily. Heterotetramer; composed of 2 small (MOCS2A) and 2 large (MOCS2B) subunits. Post-translationally, C-terminal thiocarboxylation occurs in 2 steps, it is first acyl-adenylated (-COAMP) via the hesA/moeB/thiF part of MOCS3, then thiocarboxylated (-COSH) via the rhodanese domain of MOCS3.

It localises to the cytoplasm. It functions in the pathway cofactor biosynthesis; molybdopterin biosynthesis. Its function is as follows. Acts as a sulfur carrier required for molybdopterin biosynthesis. Component of the molybdopterin synthase complex that catalyzes the conversion of precursor Z into molybdopterin by mediating the incorporation of 2 sulfur atoms into precursor Z to generate a dithiolene group. In the complex, serves as sulfur donor by being thiocarboxylated (-COSH) at its C-terminus by MOCS3. After interaction with MOCS2B, the sulfur is then transferred to precursor Z to form molybdopterin. This is Molybdopterin synthase sulfur carrier subunit from Aedes aegypti (Yellowfever mosquito).